Consider the following 420-residue polypeptide: Ribosome biogenesis protein WDR12 homolog (420 aa).

Residues Val-10–Glu-92 are ubiquitin-like (UBL) domain. WD repeat units lie at residues Leu-104–Ser-142, Gly-143–Glu-185, Gly-192–Gly-231, Gly-250–Glu-288, Ser-290–Val-329, Gly-335–Tyr-375, and Gly-379–Ala-417.

Belongs to the WD repeat WDR12/YTM1 family.

The protein resides in the nucleus. It localises to the nucleolus. The protein localises to the nucleoplasm. Its function is as follows. Required for maturation of ribosomal RNAs and formation of the large ribosomal subunit. The chain is Ribosome biogenesis protein WDR12 homolog from Drosophila yakuba (Fruit fly).